Consider the following 116-residue polypeptide: Heme-degrading monooxygenase (116 aa).

The ABM domain maps to 2 to 92 (VIVTNTSKIT…EYILENKISF (91 aa)). N6 contributes to the Fe cation binding site. H76 lines the heme pocket.

Belongs to the antibiotic biosynthesis monooxygenase family. Heme-degrading monooxygenase IsdG subfamily. In terms of assembly, homodimer.

It is found in the cytoplasm. The enzyme catalyses heme b + 3 reduced [NADPH--hemoprotein reductase] + 3 O2 = biliverdin IXalpha + CO + Fe(2+) + 3 oxidized [NADPH--hemoprotein reductase] + 3 H2O + H(+). Allows bacterial pathogens to use the host heme as an iron source. Catalyzes the oxidative degradation of the heme macrocyclic porphyrin ring to the biliverdin in the presence of a suitable electron donor such as ascorbate or NADPH--cytochrome P450 reductase, with subsequent release of free iron. The protein is Heme-degrading monooxygenase of Halalkalibacterium halodurans (strain ATCC BAA-125 / DSM 18197 / FERM 7344 / JCM 9153 / C-125) (Bacillus halodurans).